The chain runs to 292 residues: Nucleophosmin (292 aa).

M1 bears the N-acetylmethionine mark. Positions 1-117 are necessary for interaction with APEX1; it reads MEDSMDMDMS…PVHISGQHLV (117 aa). Residues 1–185 are required for interaction with SENP3; the sequence is MEDSMDMDMS…DDDDFDEEET (185 aa). S4 is modified (phosphoserine; by PLK1 and PLK2). Position 10 is a phosphoserine (S10). A Glycyl lysine isopeptide (Lys-Gly) (interchain with G-Cter in SUMO2) cross-link involves residue K27. K32 carries the N6-acetyllysine; alternate modification. A Glycyl lysine isopeptide (Lys-Gly) (interchain with G-Cter in SUMO1); alternate cross-link involves residue K32. K32 participates in a covalent cross-link: Glycyl lysine isopeptide (Lys-Gly) (interchain with G-Cter in SUMO2); alternate. S43 carries the phosphoserine modification. Residue Y67 is modified to Phosphotyrosine. A Phosphoserine modification is found at S70. A phosphothreonine mark is found at T75 and T95. Phosphoserine is present on residues S125 and S139. A disordered region spans residues 138 to 248; it reads MSGKRSAPGG…PSSVEDIKAK (111 aa). A Glycyl lysine isopeptide (Lys-Gly) (interchain with G-Cter in SUMO2) cross-link involves residue K141. At K150 the chain carries N6-acetyllysine; alternate. Residue K150 forms a Glycyl lysine isopeptide (Lys-Gly) (interchain with G-Cter in SUMO2); alternate linkage. Residues 152–157 carry the Nuclear localization signal motif; it reads PQKKVK. Position 154 is an N6-acetyllysine (K154). Acidic residues predominate over residues 159-186; the sequence is DEDDEDDDEDDEDDEDDDDDDFDEEETE. The interaction with NOP2 stretch occupies residues 186–214; that stretch reads EEKVPVKKSVRDTPAKNAQKSNQNGKDLK. Basic and acidic residues predominate over residues 187–199; sequence EKVPVKKSVRDTP. Positions 190–196 match the Nuclear localization signal motif; that stretch reads PVKKSVR. The residue at position 198 (T198) is a Phosphothreonine; by CDK1 and CDK2. A compositionally biased stretch (polar residues) spans 201–210; it reads KNAQKSNQNG. ADP-ribosylserine is present on S206. K211 is subject to N6-acetyllysine. A Glycyl lysine isopeptide (Lys-Gly) (interchain with G-Cter in SUMO2) cross-link involves residue K214. Phosphothreonine; by CDK1 is present on T217. Residues 221–233 show a composition bias toward basic and acidic residues; the sequence is KGQESFKKQEKTP. A Phosphoserine modification is found at S225. K227 is subject to N6-acetyllysine. An N6-acetyllysine; alternate modification is found at K228. Residue K228 forms a Glycyl lysine isopeptide (Lys-Gly) (interchain with G-Cter in SUMO); alternate linkage. Residues T232 and T235 each carry the phosphothreonine; by CDK1 modification. Phosphoserine occurs at positions 240 and 241. A required for nucleolar localization region spans residues 241-292; it reads SVEDIKAKMQASIEKGGSLPKVEAKFINYVKNCFRMTDQEAIQDLWQWRKSL. A Glycyl lysine isopeptide (Lys-Gly) (interchain with G-Cter in SUMO1); alternate cross-link involves residue K246. Glycyl lysine isopeptide (Lys-Gly) (interchain with G-Cter in SUMO2); alternate cross-links involve residues K246 and K248. The residue at position 248 (K248) is an N6-acetyllysine; alternate. S252 is modified (phosphoserine). The residue at position 255 (K255) is an N6-acetyllysine; alternate. Residue K255 forms a Glycyl lysine isopeptide (Lys-Gly) (interchain with G-Cter in SUMO1); alternate linkage. K255 participates in a covalent cross-link: Glycyl lysine isopeptide (Lys-Gly) (interchain with G-Cter in SUMO2); alternate. Phosphoserine is present on S258. Glycyl lysine isopeptide (Lys-Gly) (interchain with G-Cter in SUMO2); alternate cross-links involve residues K261, K265, and K271. A Glycyl lysine isopeptide (Lys-Gly) (interchain with G-Cter in SUMO); alternate cross-link involves residue K261. Residues K265 and K271 each carry the N6-acetyllysine; alternate modification. K265 participates in a covalent cross-link: Glycyl lysine isopeptide (Lys-Gly) (interchain with G-Cter in SUMO1); alternate. N6-succinyllysine; alternate is present on K265. Residue T277 is modified to Phosphothreonine. K290 is modified (N6-acetyllysine).

The protein belongs to the nucleoplasmin family. Decamer formed by two pentameric rings associated in a head-to-head fashion. Disulfide-linked dimers under certain conditions. Interacts with NSUN2 and SENP3. The SWAP complex consists of NPM1, NCL, PARP1 and SWAP70. Interacts with the methylated form of RPS10. Interacts (via N-terminal domain) with APEX1; the interaction is RNA-dependent and decreases peroxide-damaged cells. Interacts with NEK2. Interacts with ROCK2 and BRCA2. Interacts with RPGR. Interacts with CENPW. Interacts with EIF2AK2/PKR. Interacts with DDX31; this interaction prevents interaction between NPM1 and HDM2. Interacts with MYC; competitive with NOP53. Interacts with NOP53; the interaction is direct and competitive with MYC. Interacts with LRRC34. Interacts with RRP1B. Interacts with NPM3. Interacts with ALKBH2. Interacts with TTF1 (via C-terminal region). Interacts with NOP2. Interacts with ARID3C (via REKLES DOMAIN); the interaction mediates ARID3C nuclear shuttling. Acetylated at C-terminal lysine residues, thereby increasing affinity to histones. Post-translationally, ADP-ribosylated. In terms of processing, phosphorylated at Ser-4 by PLK1 and PLK2. Phosphorylation at Ser-4 by PLK2 in S phase is required for centriole duplication and is sufficient to trigger centriole replication. Phosphorylation at Ser-4 by PLK1 takes place during mitosis. Phosphorylated by CDK2 at Ser-125 and Thr-198. Phosphorylation at Thr-198 may trigger initiation of centrosome duplication. Phosphorylated by CDK1 at Thr-198, Thr-217, Thr-232 and Thr-235 during cell mitosis. When these four sites are phosphorated, RNA-binding activity seem to be abolished. May be phosphorylated at Ser-70 by NEK2. The Thr-198 phosphorylated form has higher affinity for ROCK2. Sumoylated by ARF. Post-translationally, ubiquitinated. Ubiquitination leads to proteasomal degradation. Deubiquitinated by USP36. As to expression, expressed in B-cells that have been induced to switch to various Ig isotypes.

It localises to the nucleus. The protein resides in the nucleolus. Its subcellular location is the nucleoplasm. The protein localises to the cytoplasm. It is found in the cytoskeleton. It localises to the microtubule organizing center. The protein resides in the centrosome. Its function is as follows. Involved in diverse cellular processes such as ribosome biogenesis, centrosome duplication, protein chaperoning, histone assembly, cell proliferation, and regulation of tumor suppressors p53/TP53 and ARF. Binds ribosome presumably to drive ribosome nuclear export. Associated with nucleolar ribonucleoprotein structures and bind single-stranded nucleic acids. Acts as a chaperonin for the core histones H3, H2B and H4. Stimulates APEX1 endonuclease activity on apurinic/apyrimidinic (AP) double-stranded DNA but inhibits APEX1 endonuclease activity on AP single-stranded RNA. May exert a control of APEX1 endonuclease activity within nucleoli devoted to repair AP on rDNA and the removal of oxidized rRNA molecules. In concert with BRCA2, regulates centrosome duplication. Regulates centriole duplication: phosphorylation by PLK2 is able to trigger centriole replication. Negatively regulates the activation of EIF2AK2/PKR and suppresses apoptosis through inhibition of EIF2AK2/PKR autophosphorylation. Antagonizes the inhibitory effect of ATF5 on cell proliferation and relieves ATF5-induced G2/M blockade. In complex with MYC enhances the transcription of MYC target genes. May act as chaperonin or cotransporter in the nucleolar localization of transcription termination factor TTF1. The polypeptide is Nucleophosmin (Npm1) (Mus musculus (Mouse)).